A 729-amino-acid chain; its full sequence is Cytoplasmic polyadenylation element-binding protein 4 (729 aa).

2 disordered regions span residues 20–49 and 78–133; these read FPVR…NNNT and EKAK…KEKI. The span at 24–35 shows a compositional bias: basic residues; it reads FHPHLQPPHHHQ. Over residues 83-96 the composition is skewed to low complexity; it reads QQQEQQDPLEKQQL. A phosphoserine mark is found at Ser97, Ser99, and Ser137. The segment at 218 to 328 is disordered; it reads FGGSFSPQIG…RGLNGGITPL (111 aa). The segment covering 232–249 has biased composition (basic residues); that stretch reads HHPHHPHFQHHHSQHQQQ. Residues Ser252 and Ser255 each carry the phosphoserine modification. Positions 285-300 are enriched in low complexity; sequence WSSYQSPSPTPSSSWS. A compositionally biased stretch (gly residues) spans 301 to 313; sequence PGGGGYGGWGGSQ. The residue at position 326 (Thr326) is a Phosphothreonine. Phosphoserine occurs at positions 330 and 332. RRM domains are found at residues 472–563 and 580–662; these read RKVF…PWNL and KTIF…PYVL. Residues 541–543 form an RNA-binding region; that stretch reads KLY. 8 residues coordinate Zn(2+): Cys667, Cys675, Cys684, Cys689, Cys694, Cys697, His702, and His710.

The protein belongs to the RRM CPEB family. As to quaternary structure, interacts with TOB1. In terms of tissue distribution, expressed in pancreas in islets and ductal cells (at protein level). Expressed in melanocytes.

Its subcellular location is the cytoplasm. The protein resides in the cell projection. It is found in the dendrite. It localises to the dendritic spine. The protein localises to the postsynaptic density. Its subcellular location is the axon. The protein resides in the growth cone. It is found in the endoplasmic reticulum. It localises to the perinuclear region. In terms of biological role, sequence-specific RNA-binding protein that binds to the cytoplasmic polyadenylation element (CPE), an uridine-rich sequence element (consensus sequence 5'-UUUUUAU-3') within the mRNA 3'-UTR. RNA binding results in a clear conformational change analogous to the Venus fly trap mechanism. Regulates activation of unfolded protein response (UPR) in the process of adaptation to ER stress in liver, by maintaining translation of CPE-regulated mRNAs in conditions in which global protein synthesis is inhibited. Required for cell cycle progression, specifically for cytokinesis and chromosomal segregation. Plays a role as an oncogene promoting tumor growth and progression by positively regulating translation of t-plasminogen activator/PLAT. Stimulates proliferation of melanocytes. In contrast to CPEB1 and CPEB3, does not play role in synaptic plasticity, learning and memory. The chain is Cytoplasmic polyadenylation element-binding protein 4 (CPEB4) from Homo sapiens (Human).